Here is a 99-residue protein sequence, read N- to C-terminus: DNA-binding protein Fis (99 aa).

A DNA-binding region (H-T-H motif) is located at residues 75 to 94 (QTRAALMLGVNRGTLRKKLK).

Belongs to the transcriptional regulatory Fis family. As to quaternary structure, homodimer.

Its function is as follows. Activates ribosomal RNA transcription. Plays a direct role in upstream activation of rRNA promoters. The protein is DNA-binding protein Fis of Actinobacillus succinogenes (strain ATCC 55618 / DSM 22257 / CCUG 43843 / 130Z).